We begin with the raw amino-acid sequence, 377 residues long: Beta sliding clamp (377 aa).

It belongs to the beta sliding clamp family. As to quaternary structure, forms a ring-shaped head-to-tail homodimer around DNA which binds and tethers DNA polymerases and other proteins to the DNA. The DNA replisome complex has a single clamp-loading complex (3 tau and 1 each of delta, delta', psi and chi subunits) which binds 3 Pol III cores (1 core on the leading strand and 2 on the lagging strand) each with a beta sliding clamp dimer. Additional proteins in the replisome are other copies of gamma, psi and chi, Ssb, DNA helicase and RNA primase.

Its subcellular location is the cytoplasm. In terms of biological role, confers DNA tethering and processivity to DNA polymerases and other proteins. Acts as a clamp, forming a ring around DNA (a reaction catalyzed by the clamp-loading complex) which diffuses in an ATP-independent manner freely and bidirectionally along dsDNA. Initially characterized for its ability to contact the catalytic subunit of DNA polymerase III (Pol III), a complex, multichain enzyme responsible for most of the replicative synthesis in bacteria; Pol III exhibits 3'-5' exonuclease proofreading activity. The beta chain is required for initiation of replication as well as for processivity of DNA replication. This Staphylococcus epidermidis (strain ATCC 35984 / DSM 28319 / BCRC 17069 / CCUG 31568 / BM 3577 / RP62A) protein is Beta sliding clamp (dnaN).